The chain runs to 311 residues: Malate dehydrogenase (311 aa).

NAD(+)-binding positions include 7-13 (GAAGGIG) and aspartate 34. Arginine 81 and arginine 87 together coordinate substrate. NAD(+) contacts are provided by residues asparagine 94 and 117 to 119 (ITN). Residues asparagine 119 and arginine 153 each coordinate substrate. The active-site Proton acceptor is histidine 177. Methionine 227 serves as a coordination point for NAD(+).

Belongs to the LDH/MDH superfamily. MDH type 1 family. In terms of assembly, homodimer.

The enzyme catalyses (S)-malate + NAD(+) = oxaloacetate + NADH + H(+). Functionally, catalyzes the reversible oxidation of malate to oxaloacetate. The chain is Malate dehydrogenase from Aeromonas hydrophila subsp. hydrophila (strain ATCC 7966 / DSM 30187 / BCRC 13018 / CCUG 14551 / JCM 1027 / KCTC 2358 / NCIMB 9240 / NCTC 8049).